The sequence spans 158 residues: Large ribosomal subunit protein uL13 (158 aa).

Residues proline 129 to arginine 158 form a disordered region. The span at glycine 144–arginine 158 shows a compositional bias: low complexity.

This sequence belongs to the universal ribosomal protein uL13 family. In terms of assembly, part of the 50S ribosomal subunit.

In terms of biological role, this protein is one of the early assembly proteins of the 50S ribosomal subunit, although it is not seen to bind rRNA by itself. It is important during the early stages of 50S assembly. The sequence is that of Large ribosomal subunit protein uL13 from Anaplasma phagocytophilum (strain HZ).